Here is a 111-residue protein sequence, read N- to C-terminus: Cell division protein FtsB (111 aa).

At 1 to 3 (MRL) the chain is on the cytoplasmic side. Residues 4-21 (LFLVLLVLLGLIQYPLWL) traverse the membrane as a helical segment. Residues 22–111 (GKGGWFKVWD…PGQTASAPRR (90 aa)) lie on the Periplasmic side of the membrane. The stretch at 31–62 (DLQRQVAAQHETNDGLRARNAALEAEVRDLAT) forms a coiled coil. Positions 88–111 (VPPGTPVPQPAPGAPGQTASAPRR) are disordered. A compositionally biased stretch (pro residues) spans 90 to 100 (PGTPVPQPAPG). Over residues 101–111 (APGQTASAPRR) the composition is skewed to low complexity.

It belongs to the FtsB family. As to quaternary structure, part of a complex composed of FtsB, FtsL and FtsQ.

It is found in the cell inner membrane. In terms of biological role, essential cell division protein. May link together the upstream cell division proteins, which are predominantly cytoplasmic, with the downstream cell division proteins, which are predominantly periplasmic. The chain is Cell division protein FtsB from Bordetella petrii (strain ATCC BAA-461 / DSM 12804 / CCUG 43448).